Here is a 109-residue protein sequence, read N- to C-terminus: Lipoprotein BsmA (109 aa).

The signal sequence occupies residues 1 to 24 (MVSRKRNSVIYRFASLLLVLMLSA). C25 carries the N-palmitoyl cysteine lipid modification. C25 is lipidated: S-diacylglycerol cysteine.

This sequence belongs to the BhsA/McbA family.

It is found in the cell membrane. Functionally, involved in protection of biofilms against oxidative stress. The protein is Lipoprotein BsmA (bsmA) of Escherichia coli (strain K12).